Consider the following 137-residue polypeptide: Large ribosomal subunit protein uL16 (137 aa).

Belongs to the universal ribosomal protein uL16 family. In terms of assembly, part of the 50S ribosomal subunit.

Its function is as follows. Binds 23S rRNA and is also seen to make contacts with the A and possibly P site tRNAs. The polypeptide is Large ribosomal subunit protein uL16 (Chlamydia abortus (strain DSM 27085 / S26/3) (Chlamydophila abortus)).